The following is a 250-amino-acid chain: Ubiquinone biosynthesis O-methyltransferase (250 aa).

4 residues coordinate S-adenosyl-L-methionine: Arg41, Gly72, Asp93, and Met136.

Belongs to the methyltransferase superfamily. UbiG/COQ3 family.

It carries out the reaction a 3-demethylubiquinol + S-adenosyl-L-methionine = a ubiquinol + S-adenosyl-L-homocysteine + H(+). The enzyme catalyses a 3-(all-trans-polyprenyl)benzene-1,2-diol + S-adenosyl-L-methionine = a 2-methoxy-6-(all-trans-polyprenyl)phenol + S-adenosyl-L-homocysteine + H(+). It participates in cofactor biosynthesis; ubiquinone biosynthesis. O-methyltransferase that catalyzes the 2 O-methylation steps in the ubiquinone biosynthetic pathway. The polypeptide is Ubiquinone biosynthesis O-methyltransferase (Agrobacterium fabrum (strain C58 / ATCC 33970) (Agrobacterium tumefaciens (strain C58))).